The chain runs to 144 residues: Actin-associated protein FAM107A (144 aa).

Residues 67–94 (LQRVLEHRRRNQLIKKKKEELEAKRLQC) are a coiled coil. The short motif at 74–84 (RRRNQLIKKKK) is the Nuclear localization signal element. The interval 105–124 (QRLNQLEKPPEKEEDHAPEF) is disordered. Residues 112-124 (KPPEKEEDHAPEF) are compositionally biased toward basic and acidic residues.

Belongs to the FAM107 family. In terms of assembly, interacts with ACTB. Interacts with COMMD1; this interaction stabilizes COMMD1 in the nucleus. Interacts with MAP1A. Interacts with PRDX1. Interacts with F-actin.

The protein localises to the nucleus. It is found in the cytoplasm. Its subcellular location is the cytoskeleton. It localises to the stress fiber. The protein resides in the cell junction. The protein localises to the focal adhesion. It is found in the cell projection. Its subcellular location is the ruffle membrane. It localises to the synapse. Its function is as follows. Stress-inducible actin-binding protein that plays a role in synaptic and cognitive functions by modulating actin filamentous (F-actin) dynamics. Mediates polymerization of globular actin to F-actin. Also binds to, stabilizes and bundles F-actin. Involved in synaptic function by regulating neurite outgrowth in an actin-dependent manner and for the acquisition of hippocampus-dependent cognitive function, such as learning and long-term memory. Plays a role in the actin and microtubule cytoskeleton organization; negatively regulates focal adhesion (FA) assembly promoting malignant glial cell migration in an actin-, microtubule- and MAP1A-dependent manner. Also involved in neuroblastoma G1/S phase cell cycle progression and cell proliferation inhibition by stimulating ubiquitination of NF-kappa-B subunit RELA and NF-kappa-B degradation in a COMMD1- and actin-dependent manner. May play a role in tumor development. The chain is Actin-associated protein FAM107A (FAM107A) from Pan troglodytes (Chimpanzee).